A 505-amino-acid polypeptide reads, in one-letter code: MAQVINTNSLSLLTQNNLNKSQSALGTAIERLSSGLRINSAKDDAAGQAIANRFTANIKGLTQASRNANDGISIAQTTEGALNEINNNLQRVRELAVQSANGTNSQSDLDSIQAEITQRLNEIDRVSGQTQFNGVKVLAQDNTLTIQVGANDGETIDIDLKEISSKTLGLDKLNVQDAYTPKETAVTVDKTTYKNGTDTITAQSNTDIQTAIGGGATGVTGADIKFKDGQYYLDVKGGASAGVYKATYDETTKKVNIDTTDKTPLATAEATAIRGTATITHNQIAEVTKEGVDTTTVAAQLAAAGVTGADKDNTSLVKLSFEDKNGKVIDGGYAVKMGDDFYAATYDEKQVQLLLNNHYTDGAGVLQTGAVKFGGANGKSEVVTATVGKTYLASDLDKHNFRTGGELKEVNTDKTENPLQKIDAALAQVDTLRSDLGAVQNRFNSAITNLGNTVNNLSSARSRIEDSDYATEVSNMSRAQILQQAGTSVLAQANQVPQNVLSLLR.

This sequence belongs to the bacterial flagellin family.

Its subcellular location is the secreted. The protein resides in the bacterial flagellum. Its function is as follows. Flagellin is the subunit protein which polymerizes to form the filaments of bacterial flagella. The sequence is that of Flagellin (fliC) from Salmonella muenchen.